The chain runs to 529 residues: Glycerol kinase 5 (529 aa).

2 residues coordinate ATP: S28 and S29. Glycerol contacts are provided by R98, D275, and Q276. Positions 297, 340, and 440 each coordinate ATP.

The protein belongs to the FGGY kinase family.

The protein resides in the cytoplasm. The enzyme catalyses glycerol + ATP = sn-glycerol 3-phosphate + ADP + H(+). It participates in polyol metabolism; glycerol degradation via glycerol kinase pathway; sn-glycerol 3-phosphate from glycerol: step 1/1. Its function is as follows. Skin-specific kinase that plays a key role in glycerol metabolism, catalyzing its phosphorylation to produce sn-glycerol 3-phosphate. Involved in skin-specific regulation of sterol regulatory element-binding protein (SREBP) processing and lipid biosynthesis. The polypeptide is Glycerol kinase 5 (Homo sapiens (Human)).